Consider the following 463-residue polypeptide: Siroheme synthase 1 (463 aa).

The tract at residues 1–203 (MDFLPLFCQL…GQQQAAEESV (203 aa)) is precorrin-2 dehydrogenase /sirohydrochlorin ferrochelatase. NAD(+) contacts are provided by residues 22-23 (EV) and 43-44 (PH). The residue at position 128 (Ser128) is a Phosphoserine. The uroporphyrinogen-III C-methyltransferase stretch occupies residues 215–463 (GSVTLVGAGP…YGEANTLAGV (249 aa)). Pro224 provides a ligand contact to S-adenosyl-L-methionine. Asp247 (proton acceptor) is an active-site residue. Lys269 acts as the Proton donor in catalysis. S-adenosyl-L-methionine is bound by residues 300–302 (GGD), Ile305, 330–331 (TA), Met382, and Gly411.

It in the N-terminal section; belongs to the precorrin-2 dehydrogenase / sirohydrochlorin ferrochelatase family. In the C-terminal section; belongs to the precorrin methyltransferase family.

The catalysed reaction is uroporphyrinogen III + 2 S-adenosyl-L-methionine = precorrin-2 + 2 S-adenosyl-L-homocysteine + H(+). The enzyme catalyses precorrin-2 + NAD(+) = sirohydrochlorin + NADH + 2 H(+). It catalyses the reaction siroheme + 2 H(+) = sirohydrochlorin + Fe(2+). It participates in cofactor biosynthesis; adenosylcobalamin biosynthesis; precorrin-2 from uroporphyrinogen III: step 1/1. It functions in the pathway cofactor biosynthesis; adenosylcobalamin biosynthesis; sirohydrochlorin from precorrin-2: step 1/1. The protein operates within porphyrin-containing compound metabolism; siroheme biosynthesis; precorrin-2 from uroporphyrinogen III: step 1/1. Its pathway is porphyrin-containing compound metabolism; siroheme biosynthesis; siroheme from sirohydrochlorin: step 1/1. It participates in porphyrin-containing compound metabolism; siroheme biosynthesis; sirohydrochlorin from precorrin-2: step 1/1. In terms of biological role, multifunctional enzyme that catalyzes the SAM-dependent methylations of uroporphyrinogen III at position C-2 and C-7 to form precorrin-2 via precorrin-1. Then it catalyzes the NAD-dependent ring dehydrogenation of precorrin-2 to yield sirohydrochlorin. Finally, it catalyzes the ferrochelation of sirohydrochlorin to yield siroheme. The protein is Siroheme synthase 1 of Aeromonas hydrophila subsp. hydrophila (strain ATCC 7966 / DSM 30187 / BCRC 13018 / CCUG 14551 / JCM 1027 / KCTC 2358 / NCIMB 9240 / NCTC 8049).